The following is a 296-amino-acid chain: Cytidine deaminase (296 aa).

CMP/dCMP-type deaminase domains follow at residues 47–167 (ELNE…FGPS) and 186–296 (DSND…VEPE). 88–90 (NIE) provides a ligand contact to substrate. H101 serves as a coordination point for Zn(2+). The active-site Proton donor is the E103. Positions 128 and 131 each coordinate Zn(2+).

This sequence belongs to the cytidine and deoxycytidylate deaminase family. As to quaternary structure, homodimer. It depends on Zn(2+) as a cofactor.

It catalyses the reaction cytidine + H2O + H(+) = uridine + NH4(+). It carries out the reaction 2'-deoxycytidine + H2O + H(+) = 2'-deoxyuridine + NH4(+). In terms of biological role, this enzyme scavenges exogenous and endogenous cytidine and 2'-deoxycytidine for UMP synthesis. The protein is Cytidine deaminase of Shewanella pealeana (strain ATCC 700345 / ANG-SQ1).